We begin with the raw amino-acid sequence, 65 residues long: Large ribosomal subunit protein uL29 (65 aa).

The protein belongs to the universal ribosomal protein uL29 family.

The sequence is that of Large ribosomal subunit protein uL29 from Natranaerobius thermophilus (strain ATCC BAA-1301 / DSM 18059 / JW/NM-WN-LF).